The sequence spans 1214 residues: NBPF family member NBPF1 (1214 aa).

A coiled-coil region spans residues 70–128 (MLRNERQFKEEKLAEQLKQAEELRQYKVLVHSQERELTQLREKLREGRDASRSLNQHLQ). Residues 162-200 (LSPENDEDEDEDVQVEEAEKVLESSAPREVQKAEESKVP) form a disordered region. Over residues 165–177 (ENDEDEDEDVQVE) the composition is skewed to acidic residues. An Olduvai 1 domain is found at 165–259 (ENDEDEDEDV…ECQDAVNILP (95 aa)). Residues 190 to 200 (EVQKAEESKVP) show a composition bias toward basic and acidic residues. Residues 292–399 (NEKLHPQLAE…ASRSLNQHLQ (108 aa)) are a coiled coil. Positions 433–471 (LSPENDEDEDEDVQVEEAEKVLESSAPREVQKAEESKVP) are disordered. The segment covering 436–448 (ENDEDEDEDVQVE) has biased composition (acidic residues). Positions 436–530 (ENDEDEDEDV…ECQDAVNILP (95 aa)) constitute an Olduvai 2 domain. Residues 461–471 (EVQKAEESKVP) are compositionally biased toward basic and acidic residues. Residues 610–670 (KSMLRNERQF…ASCSLNQHLQ (61 aa)) adopt a coiled-coil conformation. Olduvai domains follow at residues 707–799 (ENDN…HIIP), 800–888 (ENES…ATGP), 891–946 (SREL…LDMD), 947–1038 (EIEK…PPCP), 1041–1114 (SREL…RSTK), and 1116–1214 (RRRR…IFPQ). 2 disordered regions span residues 722–746 (EKVQ…EDSL) and 791–837 (WEDA…EGYS). Composition is skewed to acidic residues over residues 801 to 810 (NESDDEEEEE) and 821 to 833 (ESEE…ESWD). Residues 1102-1121 (GKGKKRRGRRSTKKRRRRGR) show a composition bias toward basic residues. Residues 1102–1136 (GKGKKRRGRRSTKKRRRRGRKEGEEDQNPPCPRLS) form a disordered region.

Belongs to the NBPF family. In terms of tissue distribution, widely expressed. The only tissue which shows a weak expression is kidney.

It localises to the cytoplasm. This is NBPF family member NBPF1 from Homo sapiens (Human).